Here is a 149-residue protein sequence, read N- to C-terminus: Endoribonuclease YbeY (149 aa).

The Zn(2+) site is built by H101, H105, and H111.

Belongs to the endoribonuclease YbeY family. Zn(2+) serves as cofactor.

The protein localises to the cytoplasm. In terms of biological role, single strand-specific metallo-endoribonuclease involved in late-stage 70S ribosome quality control and in maturation of the 3' terminus of the 16S rRNA. In Thermotoga neapolitana (strain ATCC 49049 / DSM 4359 / NBRC 107923 / NS-E), this protein is Endoribonuclease YbeY.